A 265-amino-acid chain; its full sequence is 4-hydroxy-tetrahydrodipicolinate reductase (265 aa).

Residues 9–14, 100–102, and 124–127 contribute to the NAD(+) site; these read GALGRM, GTT, and SPNM. His-158 serves as the catalytic Proton donor/acceptor. Position 159 (His-159) interacts with (S)-2,3,4,5-tetrahydrodipicolinate. Catalysis depends on Lys-162, which acts as the Proton donor. 168–169 lines the (S)-2,3,4,5-tetrahydrodipicolinate pocket; that stretch reads GT.

This sequence belongs to the DapB family.

It is found in the cytoplasm. The catalysed reaction is (S)-2,3,4,5-tetrahydrodipicolinate + NAD(+) + H2O = (2S,4S)-4-hydroxy-2,3,4,5-tetrahydrodipicolinate + NADH + H(+). It catalyses the reaction (S)-2,3,4,5-tetrahydrodipicolinate + NADP(+) + H2O = (2S,4S)-4-hydroxy-2,3,4,5-tetrahydrodipicolinate + NADPH + H(+). The protein operates within amino-acid biosynthesis; L-lysine biosynthesis via DAP pathway; (S)-tetrahydrodipicolinate from L-aspartate: step 4/4. Catalyzes the conversion of 4-hydroxy-tetrahydrodipicolinate (HTPA) to tetrahydrodipicolinate. The protein is 4-hydroxy-tetrahydrodipicolinate reductase of Aquifex aeolicus (strain VF5).